The chain runs to 272 residues: Nitrogenase iron protein (272 aa).

ATP is bound at residue glycine 8 to serine 15. Cysteine 94 lines the [4Fe-4S] cluster pocket. Arginine 97 carries the ADP-ribosylarginine; by dinitrogenase reductase ADP-ribosyltransferase modification. Cysteine 129 is a [4Fe-4S] cluster binding site.

This sequence belongs to the NifH/BchL/ChlL family. In terms of assembly, homodimer. [4Fe-4S] cluster serves as cofactor. In terms of processing, the reversible ADP-ribosylation of Arg-97 inactivates the nitrogenase reductase and regulates nitrogenase activity.

The enzyme catalyses N2 + 8 reduced [2Fe-2S]-[ferredoxin] + 16 ATP + 16 H2O = H2 + 8 oxidized [2Fe-2S]-[ferredoxin] + 2 NH4(+) + 16 ADP + 16 phosphate + 6 H(+). Its function is as follows. The key enzymatic reactions in nitrogen fixation are catalyzed by the nitrogenase complex, which has 2 components: the iron protein and the molybdenum-iron protein. In Clostridium acetobutylicum (strain ATCC 824 / DSM 792 / JCM 1419 / IAM 19013 / LMG 5710 / NBRC 13948 / NRRL B-527 / VKM B-1787 / 2291 / W), this protein is Nitrogenase iron protein.